Here is a 98-residue protein sequence, read N- to C-terminus: Integration host factor subunit alpha (98 aa).

The segment at 51-71 is disordered; that stretch reads NFDLRDKNERPGRNPKTGEDI. The segment covering 53-69 has biased composition (basic and acidic residues); sequence DLRDKNERPGRNPKTGE.

The protein belongs to the bacterial histone-like protein family. As to quaternary structure, heterodimer of an alpha and a beta chain.

In terms of biological role, this protein is one of the two subunits of integration host factor, a specific DNA-binding protein that functions in genetic recombination as well as in transcriptional and translational control. In Vibrio campbellii (strain ATCC BAA-1116), this protein is Integration host factor subunit alpha.